The following is a 333-amino-acid chain: Nucleoid-associated protein APL_0429 (333 aa).

It belongs to the YejK family.

The protein resides in the cytoplasm. It localises to the nucleoid. In Actinobacillus pleuropneumoniae serotype 5b (strain L20), this protein is Nucleoid-associated protein APL_0429.